A 512-amino-acid chain; its full sequence is Kynurenine 3-monooxygenase (512 aa).

This sequence belongs to the aromatic-ring hydroxylase family. KMO subfamily. It depends on FAD as a cofactor.

It localises to the mitochondrion outer membrane. It catalyses the reaction L-kynurenine + NADPH + O2 + H(+) = 3-hydroxy-L-kynurenine + NADP(+) + H2O. The protein operates within cofactor biosynthesis; NAD(+) biosynthesis; quinolinate from L-kynurenine: step 1/3. Its function is as follows. Catalyzes the hydroxylation of L-kynurenine (L-Kyn) to form 3-hydroxy-L-kynurenine (L-3OHKyn). Required for synthesis of quinolinic acid. In Aspergillus clavatus (strain ATCC 1007 / CBS 513.65 / DSM 816 / NCTC 3887 / NRRL 1 / QM 1276 / 107), this protein is Kynurenine 3-monooxygenase (bna4).